The sequence spans 578 residues: tRNA (guanine(26)-N(2))-dimethyltransferase (578 aa).

A Trm1 methyltransferase domain is found at 18–451 (NVIRERNAEI…APPAVLWDIL (434 aa)). Position 43 (R43) interacts with S-adenosyl-L-methionine. The disordered stretch occupies residues 63 to 92 (EKALKKQRKKVKEQEDEKTTPVPEDPPVYE). 2 residues coordinate S-adenosyl-L-methionine: R113 and D131. Zn(2+) is bound by residues C295, C298, C335, and C338. A disordered region spans residues 491–578 (EANPKSRKSA…PKQPKLEATA (88 aa)). The segment covering 564–578 (DVEHLPKQPKLEATA) has biased composition (basic and acidic residues).

Belongs to the class I-like SAM-binding methyltransferase superfamily. Trm1 family.

The enzyme catalyses guanosine(26) in tRNA + 2 S-adenosyl-L-methionine = N(2)-dimethylguanosine(26) in tRNA + 2 S-adenosyl-L-homocysteine + 2 H(+). In terms of biological role, dimethylates a single guanine residue at position 26 of most tRNAs using S-adenosyl-L-methionine as donor of the methyl groups. This is tRNA (guanine(26)-N(2))-dimethyltransferase from Drosophila melanogaster (Fruit fly).